The chain runs to 63 residues: MWGQGVRRFTTSVVRRSHYEEGPGKNLPFSVENKWRLLAMMTLYLGSGFAAPFFIVRHQLLKK.

The N-terminal 16 residues, 1–16, are a transit peptide targeting the mitochondrion; the sequence is MWGQGVRRFTTSVVRR. The Mitochondrial matrix portion of the chain corresponds to 17 to 33; that stretch reads SHYEEGPGKNLPFSVEN. Position 25 is an N6-acetyllysine; alternate (K25). At K25 the chain carries N6-succinyllysine; alternate. A helical transmembrane segment spans residues 34–60; that stretch reads KWRLLAMMTLYLGSGFAAPFFIVRHQL. Topologically, residues 61-63 are mitochondrial intermembrane; the sequence is LKK.

This sequence belongs to the cytochrome c oxidase VIIc family. Component of the cytochrome c oxidase (complex IV, CIV), a multisubunit enzyme composed of 14 subunits. The complex is composed of a catalytic core of 3 subunits MT-CO1, MT-CO2 and MT-CO3, encoded in the mitochondrial DNA, and 11 supernumerary subunits COX4I, COX5A, COX5B, COX6A, COX6B, COX6C, COX7A, COX7B, COX7C, COX8 and NDUFA4, which are encoded in the nuclear genome. The complex exists as a monomer or a dimer and forms supercomplexes (SCs) in the inner mitochondrial membrane with NADH-ubiquinone oxidoreductase (complex I, CI) and ubiquinol-cytochrome c oxidoreductase (cytochrome b-c1 complex, complex III, CIII), resulting in different assemblies (supercomplex SCI(1)III(2)IV(1) and megacomplex MCI(2)III(2)IV(2)). Interacts with RAB5IF.

The protein resides in the mitochondrion inner membrane. Its pathway is energy metabolism; oxidative phosphorylation. Component of the cytochrome c oxidase, the last enzyme in the mitochondrial electron transport chain which drives oxidative phosphorylation. The respiratory chain contains 3 multisubunit complexes succinate dehydrogenase (complex II, CII), ubiquinol-cytochrome c oxidoreductase (cytochrome b-c1 complex, complex III, CIII) and cytochrome c oxidase (complex IV, CIV), that cooperate to transfer electrons derived from NADH and succinate to molecular oxygen, creating an electrochemical gradient over the inner membrane that drives transmembrane transport and the ATP synthase. Cytochrome c oxidase is the component of the respiratory chain that catalyzes the reduction of oxygen to water. Electrons originating from reduced cytochrome c in the intermembrane space (IMS) are transferred via the dinuclear copper A center (CU(A)) of subunit 2 and heme A of subunit 1 to the active site in subunit 1, a binuclear center (BNC) formed by heme A3 and copper B (CU(B)). The BNC reduces molecular oxygen to 2 water molecules using 4 electrons from cytochrome c in the IMS and 4 protons from the mitochondrial matrix. This chain is Cytochrome c oxidase subunit 7C, mitochondrial (COX7C), found in Carlito syrichta (Philippine tarsier).